A 468-amino-acid polypeptide reads, in one-letter code: Sorting and assembly machinery component 50 homolog B (468 aa).

A disordered region spans residues 1–25 (MGTVHARSLDPLPMNGPDFGSPDDA). A POTRA domain is found at 44 to 124 (VVVQRVHFEG…LDVTFEVTEL (81 aa)).

This sequence belongs to the SAM50/omp85 family. As to quaternary structure, associates with the mitochondrial contact site and cristae organizing system (MICOS) complex (also known as MINOS or MitOS complex).

The protein resides in the mitochondrion outer membrane. In terms of biological role, may play a role in the maintenance of the structure of mitochondrial cristae. The polypeptide is Sorting and assembly machinery component 50 homolog B (samm50-b) (Xenopus laevis (African clawed frog)).